The sequence spans 95 residues: Aspartyl/glutamyl-tRNA(Asn/Gln) amidotransferase subunit C (95 aa).

It belongs to the GatC family. As to quaternary structure, heterotrimer of A, B and C subunits.

The catalysed reaction is L-glutamyl-tRNA(Gln) + L-glutamine + ATP + H2O = L-glutaminyl-tRNA(Gln) + L-glutamate + ADP + phosphate + H(+). It carries out the reaction L-aspartyl-tRNA(Asn) + L-glutamine + ATP + H2O = L-asparaginyl-tRNA(Asn) + L-glutamate + ADP + phosphate + 2 H(+). Its function is as follows. Allows the formation of correctly charged Asn-tRNA(Asn) or Gln-tRNA(Gln) through the transamidation of misacylated Asp-tRNA(Asn) or Glu-tRNA(Gln) in organisms which lack either or both of asparaginyl-tRNA or glutaminyl-tRNA synthetases. The reaction takes place in the presence of glutamine and ATP through an activated phospho-Asp-tRNA(Asn) or phospho-Glu-tRNA(Gln). This is Aspartyl/glutamyl-tRNA(Asn/Gln) amidotransferase subunit C from Beijerinckia indica subsp. indica (strain ATCC 9039 / DSM 1715 / NCIMB 8712).